A 210-amino-acid chain; its full sequence is HTH-type transcriptional repressor ComR (210 aa).

Residues 18–78 (VFDRDAALDK…AVLDRYIDRF (61 aa)) form the HTH tetR-type domain. A DNA-binding region (H-T-H motif) is located at residues 41–60 (SLADLVEATGAKAPTLYAEF).

Its activity is regulated as follows. Binding to the promoter region of BhsA/ComC is released in the presence of copper. Represses expression of BhsA/ComC by binding to its promoter region in the absence of copper. The polypeptide is HTH-type transcriptional repressor ComR (comR) (Escherichia coli (strain K12)).